Consider the following 422-residue polypeptide: UDP-N-acetylglucosamine 1-carboxyvinyltransferase (422 aa).

22–23 (KN) lines the phosphoenolpyruvate pocket. Arg94 lines the UDP-N-acetyl-alpha-D-glucosamine pocket. Residue Cys118 is the Proton donor of the active site. Cys118 is modified (2-(S-cysteinyl)pyruvic acid O-phosphothioketal). UDP-N-acetyl-alpha-D-glucosamine is bound by residues 123–127 (RPVDL), Asp309, and Ile331.

This sequence belongs to the EPSP synthase family. MurA subfamily.

The protein resides in the cytoplasm. The catalysed reaction is phosphoenolpyruvate + UDP-N-acetyl-alpha-D-glucosamine = UDP-N-acetyl-3-O-(1-carboxyvinyl)-alpha-D-glucosamine + phosphate. It functions in the pathway cell wall biogenesis; peptidoglycan biosynthesis. In terms of biological role, cell wall formation. Adds enolpyruvyl to UDP-N-acetylglucosamine. This chain is UDP-N-acetylglucosamine 1-carboxyvinyltransferase, found in Cereibacter sphaeroides (strain KD131 / KCTC 12085) (Rhodobacter sphaeroides).